Consider the following 445-residue polypeptide: Phosphoglucosamine mutase (445 aa).

Serine 102 functions as the Phosphoserine intermediate in the catalytic mechanism. Positions 102, 241, 243, and 245 each coordinate Mg(2+). Serine 102 is subject to Phosphoserine.

Belongs to the phosphohexose mutase family. Requires Mg(2+) as cofactor. Activated by phosphorylation.

It catalyses the reaction alpha-D-glucosamine 1-phosphate = D-glucosamine 6-phosphate. Catalyzes the conversion of glucosamine-6-phosphate to glucosamine-1-phosphate. This chain is Phosphoglucosamine mutase, found in Shewanella oneidensis (strain ATCC 700550 / JCM 31522 / CIP 106686 / LMG 19005 / NCIMB 14063 / MR-1).